The chain runs to 521 residues: GMP synthase [glutamine-hydrolyzing] (521 aa).

A Glutamine amidotransferase type-1 domain is found at 8-203 (KILILDFGAQ…VVDICGCQTL (196 aa)). The Nucleophile role is filled by cysteine 85. Catalysis depends on residues histidine 177 and glutamate 179. The region spanning 204–396 (WTAANIIDDQ…LGLPRTMVYR (193 aa)) is the GMPS ATP-PPase domain. 231–237 (SGGVDSS) contacts ATP.

In terms of assembly, homodimer.

The enzyme catalyses XMP + L-glutamine + ATP + H2O = GMP + L-glutamate + AMP + diphosphate + 2 H(+). Its pathway is purine metabolism; GMP biosynthesis; GMP from XMP (L-Gln route): step 1/1. Functionally, catalyzes the synthesis of GMP from XMP. The protein is GMP synthase [glutamine-hydrolyzing] of Xanthomonas oryzae pv. oryzae (strain MAFF 311018).